A 393-amino-acid chain; its full sequence is Succinate--CoA ligase [ADP-forming] subunit beta (393 aa).

Residues 9-245 enclose the ATP-grasp domain; the sequence is KMLFAQYGIP…PSQEDKCETY (237 aa). Residues K46, 53-55, E99, I102, and E107 contribute to the ATP site; that span reads GRG. Mg(2+) contacts are provided by N200 and D214. Substrate-binding positions include N265 and 322–324; that span reads GIV.

Belongs to the succinate/malate CoA ligase beta subunit family. Heterotetramer of two alpha and two beta subunits. Requires Mg(2+) as cofactor.

It catalyses the reaction succinate + ATP + CoA = succinyl-CoA + ADP + phosphate. The enzyme catalyses GTP + succinate + CoA = succinyl-CoA + GDP + phosphate. It functions in the pathway carbohydrate metabolism; tricarboxylic acid cycle; succinate from succinyl-CoA (ligase route): step 1/1. Functionally, succinyl-CoA synthetase functions in the citric acid cycle (TCA), coupling the hydrolysis of succinyl-CoA to the synthesis of either ATP or GTP and thus represents the only step of substrate-level phosphorylation in the TCA. The beta subunit provides nucleotide specificity of the enzyme and binds the substrate succinate, while the binding sites for coenzyme A and phosphate are found in the alpha subunit. The sequence is that of Succinate--CoA ligase [ADP-forming] subunit beta from Baumannia cicadellinicola subsp. Homalodisca coagulata.